Here is a 129-residue protein sequence, read N- to C-terminus: Thioredoxin H7 (129 aa).

The 124-residue stretch at Ser-6 to Val-129 folds into the Thioredoxin domain. Active-site nucleophile residues include Cys-55 and Cys-58. Cys-55 and Cys-58 are disulfide-bonded.

It belongs to the thioredoxin family. Plant H-type subfamily.

The protein resides in the cytoplasm. Its function is as follows. Probable thiol-disulfide oxidoreductase that may be involved in the redox regulation of a number of cytosolic enzymes. This chain is Thioredoxin H7 (TRX7), found in Arabidopsis thaliana (Mouse-ear cress).